Here is a 448-residue protein sequence, read N- to C-terminus: Histidine--tRNA ligase (448 aa).

Disordered stretches follow at residues 1-20 (MAIK…SPKL) and 428-448 (AGQA…QEKA).

The protein belongs to the class-II aminoacyl-tRNA synthetase family. In terms of assembly, homodimer.

The protein localises to the cytoplasm. It catalyses the reaction tRNA(His) + L-histidine + ATP = L-histidyl-tRNA(His) + AMP + diphosphate + H(+). In Deinococcus deserti (strain DSM 17065 / CIP 109153 / LMG 22923 / VCD115), this protein is Histidine--tRNA ligase.